The chain runs to 155 residues: Peptidyl-prolyl cis-trans isomerase ppi1 (155 aa).

Residues 1-154 form the PPIase cyclophilin-type domain; that stretch reads MANVELQTSL…EPLKIIKAVA (154 aa).

Belongs to the cyclophilin-type PPIase family. PPIL1 subfamily. In terms of assembly, interacts with cwf13/snw1.

It carries out the reaction [protein]-peptidylproline (omega=180) = [protein]-peptidylproline (omega=0). Functionally, PPIases accelerate the folding of proteins. It catalyzes the cis-trans isomerization of proline imidic peptide bonds in oligopeptides. The chain is Peptidyl-prolyl cis-trans isomerase ppi1 (ppi1) from Schizosaccharomyces pombe (strain 972 / ATCC 24843) (Fission yeast).